The following is a 162-amino-acid chain: NADH-quinone oxidoreductase subunit I (162 aa).

4Fe-4S ferredoxin-type domains lie at 54–83 (RRYENGEERCIACKLCEAVCPAMAITIESE) and 93–122 (TRYDIDLTKCIFCGFCEESCPVDSIVETQI). Residues C63, C66, C69, C73, C102, C105, C108, and C112 each coordinate [4Fe-4S] cluster.

It belongs to the complex I 23 kDa subunit family. NDH-1 is composed of 14 different subunits. Subunits NuoA, H, J, K, L, M, N constitute the membrane sector of the complex. Requires [4Fe-4S] cluster as cofactor.

The protein resides in the cell inner membrane. It carries out the reaction a quinone + NADH + 5 H(+)(in) = a quinol + NAD(+) + 4 H(+)(out). NDH-1 shuttles electrons from NADH, via FMN and iron-sulfur (Fe-S) centers, to quinones in the respiratory chain. The immediate electron acceptor for the enzyme in this species is believed to be ubiquinone. Couples the redox reaction to proton translocation (for every two electrons transferred, four hydrogen ions are translocated across the cytoplasmic membrane), and thus conserves the redox energy in a proton gradient. The protein is NADH-quinone oxidoreductase subunit I of Burkholderia vietnamiensis (strain G4 / LMG 22486) (Burkholderia cepacia (strain R1808)).